The primary structure comprises 557 residues: MSDPEMGWVPEPPTMTLGASRVELRVSCHGLLDRDTLTKPHPCVLLKLYSDEQWVEVERTEVLRSCSSPVFSRVLALEYFFEEKQPLQFHVFDAEDGATSPRNDTFLGSTECTLGQIVSQTKVTKPLLLKNGKTAGKSTITIVAEEVSGTNDYVQLTFRAYKLDNKDLFSKSDPFMEIYKTNEDQSDQLVWRTEVVKNNLNPSWEPFRLSLHSLCSCDVHRPLKFLVYDYDSSGKHDFIGEFTSTFQEMQEGTANPGQEMQWDCINPKYRDKKKNYKSSGTVVLAQCTVEKVHTFLDYIMGGCQISFTVAIDFTASNGDPRSSQSLHCLSPRQPNHYLQALRAVGGICQDYDSDKRFPAFGFGARIPPNFEVSHDFAINFDPENPECEEISGVIASYRRCLPQIQLYGPTNVAPIINRVAEPAQREQSTGQATKYSVLLVLTDGVVSDMAETRTAIVRASRLPMSIIIVGVGNADFSDMRLLDGDDGPLRCPRGVPAARDIVQFVPFRDFKDAAPSALAKCVLAEVPRQVVEYYASQGISPGAPRPCTLATTPSPSP.

C2 domains are found at residues 2 to 127 (SDPE…TKPL) and 134 to 263 (TAGK…MQWD). Residues Asp167, Asp173, Asp229, Asp231, and Asp237 each coordinate Ca(2+). Residues 244 to 303 (STFQEMQEGTANPGQEMQWDCINPKYRDKKKNYKSSGTVVLAQCTVEKVHTFLDYIMGGC) form a linker region region. A VWFA domain is found at 306–526 (SFTVAIDFTA…ALAKCVLAEV (221 aa)).

It belongs to the copine family. In terms of assembly, interacts (via second C2 domain) with OS9 (via C-terminus); this interaction occurs in a calcium-dependent manner in vitro. May interact with NECAB1. Ca(2+) serves as cofactor. Widely expressed in the brain. Expressed weakly in the kidney, liver and fetal heart. Expressed in melanocytes.

The protein resides in the cytoplasm. It localises to the cell membrane. It is found in the endosome. Its subcellular location is the cytoplasmic vesicle. The protein localises to the clathrin-coated vesicle. The protein resides in the perikaryon. It localises to the cell projection. It is found in the dendrite. Functionally, calcium-dependent phospholipid-binding protein that plays a role in calcium-mediated intracellular processes. Binds phospholipid membranes in a calcium-dependent manner. Plays a role in dendrite formation by melanocytes. This is Copine-6 from Homo sapiens (Human).